Here is a 471-residue protein sequence, read N- to C-terminus: MDETSPLVSPDRDQTDYSYQSQCSPGVPVCLSPNGRFSAVPGVVVRIPGSATSPIRGSAASGPSPPGSPCDRERQPLLERSQTRGAAAQAERERNKFPDDPEFAEVVKKAEKAIVRDILPERISQGSSGSYFVKNEQGEIIAVFKPKNEEPYGQLNPKWTKWLQKLCCPCCFGRDCLVLNQGYLSEAGASLVDQKLELNIVPRTKVVFLASETFNYSAIDRVKSRGKRLALEKVPKVGQRFNRIGLPPKVGSFQLFVKGYKDADYWLRRFEADPLPENTNRQLQLQFERLVVLDYIIRNTDRGNDNWLIKYDCPMDSASARDDWVMVKEPVIKIAAIDNGLAFPLKHPDSWRAYPFYWAWLPQAKIQFSQEIKDLILPKISDPNFVKDLEEDLYELFKRDPGFDRGQFRKQIAVMRGQILNLTQALKDGKSPLQLVQTPPVIVETARSHQKSTSESYTQSFQSRKPFFSWW.

Disordered regions lie at residues 1 to 25 and 48 to 101; these read MDET…QCSP and PGSA…PDDP. The span at 90–101 shows a compositional bias: basic and acidic residues; the sequence is AERERNKFPDDP. In terms of domain architecture, PI3K/PI4K catalytic spans 117–445; the sequence is DILPERISQG…VQTPPVIVET (329 aa). The interval 123-129 is G-loop; that stretch reads ISQGSSG. Residues 124–130 and Lys-145 contribute to the ATP site; that span reads SQGSSGS. Residues 150–152 are important for substrate binding; the sequence is EPY. The segment at 158–171 is important for interaction with membranes; that stretch reads KWTKWLQKLCCPCC. 4 S-palmitoyl cysteine lipidation sites follow: Cys-167, Cys-168, Cys-170, and Cys-171. 254–257 contributes to the ATP binding site; it reads QLFV. The important for interaction with membranes stretch occupies residues 261–269; sequence KDADYWLRR. The tract at residues 298-306 is catalytic loop; that stretch reads RNTDRGNDN. Residues 336–356 are activation loop; the sequence is AIDNGLAFPLKHPDSWRAYPF. Asp-338 serves as a coordination point for ATP. The tract at residues 351-360 is important for interaction with membranes; that stretch reads WRAYPFYWAW.

It belongs to the PI3/PI4-kinase family. Type II PI4K subfamily.

The protein localises to the golgi apparatus. It localises to the trans-Golgi network membrane. Its subcellular location is the membrane raft. It is found in the endosome. The protein resides in the endosome membrane. The protein localises to the cytoplasmic vesicle. It localises to the cell projection. Its subcellular location is the dendrite. It is found in the presynaptic cell membrane. The protein resides in the synapse. The protein localises to the synaptosome. It localises to the mitochondrion. Its subcellular location is the membrane. It is found in the cell membrane. The protein resides in the perikaryon. The protein localises to the neuron projection. The catalysed reaction is a 1,2-diacyl-sn-glycero-3-phospho-(1D-myo-inositol) + ATP = a 1,2-diacyl-sn-glycero-3-phospho-(1D-myo-inositol 4-phosphate) + ADP + H(+). Its function is as follows. Membrane-bound phosphatidylinositol-4 kinase (PI4-kinase) that catalyzes the phosphorylation of phosphatidylinositol (PI) to phosphatidylinositol 4-phosphate (PI4P), a lipid that plays important roles in endocytosis, Golgi function, protein sorting and membrane trafficking. Besides, phosphorylation of phosphatidylinositol (PI) to phosphatidylinositol 4-phosphate (PI4P) is the first committed step in the generation of phosphatidylinositol 4,5-bisphosphate (PIP2), a precursor of the second messenger inositol 1,4,5-trisphosphate (InsP3). This is Phosphatidylinositol 4-kinase type 2-alpha (pi4k2a) from Xenopus tropicalis (Western clawed frog).